Here is a 203-residue protein sequence, read N- to C-terminus: Protein GrpE (203 aa).

Basic and acidic residues predominate over residues 1–10 (MSNESIKAEQ). A disordered region spans residues 1-20 (MSNESIKAEQDLIQEGVESE).

Belongs to the GrpE family. As to quaternary structure, homodimer.

Its subcellular location is the cytoplasm. Participates actively in the response to hyperosmotic and heat shock by preventing the aggregation of stress-denatured proteins, in association with DnaK and GrpE. It is the nucleotide exchange factor for DnaK and may function as a thermosensor. Unfolded proteins bind initially to DnaJ; upon interaction with the DnaJ-bound protein, DnaK hydrolyzes its bound ATP, resulting in the formation of a stable complex. GrpE releases ADP from DnaK; ATP binding to DnaK triggers the release of the substrate protein, thus completing the reaction cycle. Several rounds of ATP-dependent interactions between DnaJ, DnaK and GrpE are required for fully efficient folding. This Shewanella sp. (strain MR-4) protein is Protein GrpE.